The primary structure comprises 419 residues: Multifunctional CCA protein (419 aa).

ATP contacts are provided by Gly8 and Arg11. Gly8 and Arg11 together coordinate CTP. Mg(2+)-binding residues include Asp21 and Asp23. Arg91, Arg141, and Arg144 together coordinate ATP. CTP is bound by residues Arg91, Arg141, and Arg144. Positions Thr230 to Leu331 constitute an HD domain.

The protein belongs to the tRNA nucleotidyltransferase/poly(A) polymerase family. Bacterial CCA-adding enzyme type 1 subfamily. Monomer. Can also form homodimers and oligomers. Mg(2+) is required as a cofactor. It depends on Ni(2+) as a cofactor.

It catalyses the reaction a tRNA precursor + 2 CTP + ATP = a tRNA with a 3' CCA end + 3 diphosphate. The catalysed reaction is a tRNA with a 3' CCA end + 2 CTP + ATP = a tRNA with a 3' CCACCA end + 3 diphosphate. Its function is as follows. Catalyzes the addition and repair of the essential 3'-terminal CCA sequence in tRNAs without using a nucleic acid template. Adds these three nucleotides in the order of C, C, and A to the tRNA nucleotide-73, using CTP and ATP as substrates and producing inorganic pyrophosphate. tRNA 3'-terminal CCA addition is required both for tRNA processing and repair. Also involved in tRNA surveillance by mediating tandem CCA addition to generate a CCACCA at the 3' terminus of unstable tRNAs. While stable tRNAs receive only 3'-terminal CCA, unstable tRNAs are marked with CCACCA and rapidly degraded. This Paracidovorax citrulli (strain AAC00-1) (Acidovorax citrulli) protein is Multifunctional CCA protein.